The sequence spans 388 residues: Succinate--CoA ligase [ADP-forming] subunit beta (388 aa).

The ATP-grasp domain maps to 9 to 244; that stretch reads KQLFARYGLP…HSQEDEREAH (236 aa). ATP-binding positions include lysine 46, 53–55, glutamate 99, threonine 102, and glutamate 107; that span reads GRG. The Mg(2+) site is built by asparagine 199 and aspartate 213. Substrate contacts are provided by residues asparagine 264 and 321 to 323; that span reads GIV.

The protein belongs to the succinate/malate CoA ligase beta subunit family. In terms of assembly, heterotetramer of two alpha and two beta subunits. It depends on Mg(2+) as a cofactor.

It catalyses the reaction succinate + ATP + CoA = succinyl-CoA + ADP + phosphate. The enzyme catalyses GTP + succinate + CoA = succinyl-CoA + GDP + phosphate. Its pathway is carbohydrate metabolism; tricarboxylic acid cycle; succinate from succinyl-CoA (ligase route): step 1/1. In terms of biological role, succinyl-CoA synthetase functions in the citric acid cycle (TCA), coupling the hydrolysis of succinyl-CoA to the synthesis of either ATP or GTP and thus represents the only step of substrate-level phosphorylation in the TCA. The beta subunit provides nucleotide specificity of the enzyme and binds the substrate succinate, while the binding sites for coenzyme A and phosphate are found in the alpha subunit. This chain is Succinate--CoA ligase [ADP-forming] subunit beta, found in Sodalis glossinidius (strain morsitans).